The primary structure comprises 982 residues: Little elongation complex subunit 2 (982 aa).

Residues Ser-17 and Ser-326 each carry the phosphoserine modification. Polar residues predominate over residues 410 to 427 (TTKVSKSPSPASTSTVPN). 2 disordered regions span residues 410–450 (TTKV…PDIS) and 473–504 (GMDGGPEECKNKDDQGFESCEKVSNSDKPLIQ). A compositionally biased stretch (basic and acidic residues) spans 479–497 (EECKNKDDQGFESCEKVSN). The residue at position 571 (Ser-571) is a Phosphoserine. At Thr-573 the chain carries Phosphothreonine. Disordered regions lie at residues 595–623 (VGSNLSSRPASPNSSSGQASVGNQTNTAC), 672–697 (ENSKQPSVSEQLSGPSDSSSWPKSGW), and 930–982 (PKSL…RKIT). A compositionally biased stretch (low complexity) spans 597–610 (SNLSSRPASPNSSS). Composition is skewed to polar residues over residues 611–623 (GQASVGNQTNTAC) and 672–683 (ENSKQPSVSEQL). Residues 684–697 (SGPSDSSSWPKSGW) show a composition bias toward low complexity. Over residues 956–970 (SMETKSSCLPAQQVE) the composition is skewed to polar residues.

Belongs to the ICE2 family. Component of the little elongation complex (LEC), at least composed of ELL (ELL, ELL2 or ELL3), ZC3H8, ICE1 and ICE2. Interacts with ICE1 (via C-terminus domain). Interacts with ELL. In terms of tissue distribution, expressed at low levels in lung and testis.

Its subcellular location is the nucleus. Component of the little elongation complex (LEC), a complex required to regulate small nuclear RNA (snRNA) gene transcription by RNA polymerase II and III. The polypeptide is Little elongation complex subunit 2 (ICE2) (Homo sapiens (Human)).